Here is a 671-residue protein sequence, read N- to C-terminus: Diguanylate cyclase DgcP (671 aa).

Disordered regions lie at residues 204 to 223 (AAPS…PPQP) and 278 to 298 (EAGA…PEAP). D549 serves as a coordination point for Mg(2+). Positions 557, 562, and 566 each coordinate substrate. E592 provides a ligand contact to Mg(2+). The active site involves E592.

In terms of assembly, homodimer. The cofactor is Mg(2+).

The protein localises to the cell inner membrane. It carries out the reaction 2 GTP = 3',3'-c-di-GMP + 2 diphosphate. It functions in the pathway purine metabolism; 3',5'-cyclic di-GMP biosynthesis. In terms of biological role, catalyzes the synthesis of cyclic-di-GMP (c-di-GMP) via the condensation of 2 GTP molecules. Cyclic-di-GMP is a second messenger which controls cell surface-associated traits in bacteria. Localizes at the cell poles through interaction with FimV where it increases the local pools of c-di-GMP. This chain is Diguanylate cyclase DgcP (dgcP), found in Pseudomonas aeruginosa (strain ATCC 15692 / DSM 22644 / CIP 104116 / JCM 14847 / LMG 12228 / 1C / PRS 101 / PAO1).